We begin with the raw amino-acid sequence, 537 residues long: YNNNNKNNNNNDDGNINYQNTNEFKDNKKNMNFKNQYNNNYKFDENMNNSNTMHSRNSNVEEHLRNNSIDMNNSNINNYTNQQTRFSSFMENENENENKNYHTGGMNNNIHFKNKYDNNNSSMKNTDNNKTDTSYNMKGTINNDNNNMDYLRNINNINEYKGSAKNKFYTNYMNKNNLKFTQNNNDNMNINEDNNNNNNNNNNNNGVFSNYQNNNMNRNNSINIKRNLNNNNNINNNMNKMGSQDKNQNSNNNFYMNYNYQNRKNSMNNNMNNNMNNNMNHNMNNNMNHNMNNNMNHNMNNNMNHNMNNNMNNINSLDSDMSPNYHAHVKMSMMNYNNNESNTANPNQMNFEQTNNDNMKRENNNMNNYGYDDNTVHVNNNTPSTDFFSRAVGYNNNYLNNNNNMNSAVNNNSSNGNNMKNENSENKNVADNNDSLNNNKNNNNNINMNESINNNNTLNNNNEYNNQNNNEDEDDDDWGELGEDKYIDINSIMKKKNVILNQLEADLNDLSKKGNDGKNKKKNKMKKDDLFVLPHTN.

5 disordered regions span residues 1-22 (YNNNNKNNNNNDDGNINYQNTN), 187-254 (NMNI…NNNF), 336-372 (YNNNESNTANPNQMNFEQTNNDNMKRENNNMNNYGYD), 399-479 (LNNN…DDWG), and 509-528 (DLSKKGNDGKNKKKNKMKKD). Composition is skewed to low complexity over residues 336 to 347 (YNNNESNTANPN) and 399 to 469 (LNNN…NQNN). Residues 470-479 (NEDEDDDDWG) show a composition bias toward acidic residues. Residues 509–518 (DLSKKGNDGK) show a composition bias toward basic and acidic residues.

The sequence is that of Asparagine-rich protein from Plasmodium falciparum.